The sequence spans 297 residues: 4-hydroxy-tetrahydrodipicolinate synthase (297 aa).

A pyruvate-binding site is contributed by threonine 49. Tyrosine 137 acts as the Proton donor/acceptor in catalysis. The active-site Schiff-base intermediate with substrate is the lysine 166. Isoleucine 208 is a binding site for pyruvate.

Belongs to the DapA family. As to quaternary structure, homotetramer; dimer of dimers.

The protein resides in the cytoplasm. The catalysed reaction is L-aspartate 4-semialdehyde + pyruvate = (2S,4S)-4-hydroxy-2,3,4,5-tetrahydrodipicolinate + H2O + H(+). The protein operates within amino-acid biosynthesis; L-lysine biosynthesis via DAP pathway; (S)-tetrahydrodipicolinate from L-aspartate: step 3/4. Catalyzes the condensation of (S)-aspartate-beta-semialdehyde [(S)-ASA] and pyruvate to 4-hydroxy-tetrahydrodipicolinate (HTPA). The sequence is that of 4-hydroxy-tetrahydrodipicolinate synthase from Parabacteroides distasonis (strain ATCC 8503 / DSM 20701 / CIP 104284 / JCM 5825 / NCTC 11152).